Consider the following 256-residue polypeptide: Acetylglutamate kinase (256 aa).

Substrate contacts are provided by residues 40 to 41, R62, and N153; that span reads GG.

It belongs to the acetylglutamate kinase family. ArgB subfamily.

It is found in the cytoplasm. The catalysed reaction is N-acetyl-L-glutamate + ATP = N-acetyl-L-glutamyl 5-phosphate + ADP. It participates in amino-acid biosynthesis; L-arginine biosynthesis; N(2)-acetyl-L-ornithine from L-glutamate: step 2/4. Functionally, catalyzes the ATP-dependent phosphorylation of N-acetyl-L-glutamate. This chain is Acetylglutamate kinase, found in Bacillus cytotoxicus (strain DSM 22905 / CIP 110041 / 391-98 / NVH 391-98).